A 192-amino-acid chain; its full sequence is uncharacterized protein (192 aa).

Belongs to the CAPAB/TerDEXZ family.

This is an uncharacterized protein from Bacillus subtilis (strain 168).